Consider the following 373-residue polypeptide: tRNA-specific 2-thiouridylase MnmA (373 aa).

ATP contacts are provided by residues 12–19 (GMSGGVDS) and Met-38. Residues 98–100 (NPD) form an interaction with target base in tRNA region. Residue Cys-103 is the Nucleophile of the active site. A disulfide bond links Cys-103 and Cys-200. Gly-127 is an ATP binding site. The interaction with tRNA stretch occupies residues 150–152 (KDQ). Residue Cys-200 is the Cysteine persulfide intermediate of the active site. The tract at residues 312–313 (RY) is interaction with tRNA.

Belongs to the MnmA/TRMU family.

Its subcellular location is the cytoplasm. It carries out the reaction S-sulfanyl-L-cysteinyl-[protein] + uridine(34) in tRNA + AH2 + ATP = 2-thiouridine(34) in tRNA + L-cysteinyl-[protein] + A + AMP + diphosphate + H(+). Catalyzes the 2-thiolation of uridine at the wobble position (U34) of tRNA, leading to the formation of s(2)U34. This chain is tRNA-specific 2-thiouridylase MnmA, found in Streptococcus thermophilus (strain ATCC BAA-491 / LMD-9).